The chain runs to 91 residues: Small ribosomal subunit protein uS15 (91 aa).

The protein belongs to the universal ribosomal protein uS15 family. In terms of assembly, part of the 30S ribosomal subunit. Forms a bridge to the 50S subunit in the 70S ribosome, contacting the 23S rRNA.

One of the primary rRNA binding proteins, it binds directly to 16S rRNA where it helps nucleate assembly of the platform of the 30S subunit by binding and bridging several RNA helices of the 16S rRNA. Its function is as follows. Forms an intersubunit bridge (bridge B4) with the 23S rRNA of the 50S subunit in the ribosome. This chain is Small ribosomal subunit protein uS15, found in Rickettsia peacockii (strain Rustic).